The sequence spans 323 residues: ATP synthase gamma chain (323 aa).

Belongs to the ATPase gamma chain family. F-type ATPases have 2 components, CF(1) - the catalytic core - and CF(0) - the membrane proton channel. CF(1) has five subunits: alpha(3), beta(3), gamma(1), delta(1), epsilon(1). CF(0) has three main subunits: a, b and c.

Its subcellular location is the cell inner membrane. Its function is as follows. Produces ATP from ADP in the presence of a proton gradient across the membrane. The gamma chain is believed to be important in regulating ATPase activity and the flow of protons through the CF(0) complex. The sequence is that of ATP synthase gamma chain from Rickettsia africae (strain ESF-5).